We begin with the raw amino-acid sequence, 193 residues long: Recombination protein RecR (193 aa).

Residues 61-76 (CASCNALSETEVSEIC) form a C4-type; degenerate zinc finger. In terms of domain architecture, Toprim spans 84 to 170 (SQLCMVLHPR…TFTKIAQGVP (87 aa)).

This sequence belongs to the RecR family.

May play a role in DNA repair. It seems to be involved in an RecBC-independent recombinational process of DNA repair. It may act with RecF and RecO. In Helicobacter pylori (strain J99 / ATCC 700824) (Campylobacter pylori J99), this protein is Recombination protein RecR.